A 318-amino-acid chain; its full sequence is Small ribosomal subunit biogenesis GTPase RsgA (318 aa).

Residues 1–16 show a composition bias toward basic residues; that stretch reads MTRGKPGRAGHDRRHA. The interval 1–21 is disordered; that stretch reads MTRGKPGRAGHDRRHASTGEH. The CP-type G domain maps to 84-249; it reads SDQFKSKQLA…LIDSPGFQEF (166 aa). GTP is bound by residues 133–136 and 187–195; these read NKID and GQSGMGKSS. The Zn(2+) site is built by C273, C278, H280, and C286.

The protein belongs to the TRAFAC class YlqF/YawG GTPase family. RsgA subfamily. In terms of assembly, monomer. Associates with 30S ribosomal subunit, binds 16S rRNA. Zn(2+) serves as cofactor.

Its subcellular location is the cytoplasm. Functionally, one of several proteins that assist in the late maturation steps of the functional core of the 30S ribosomal subunit. Helps release RbfA from mature subunits. May play a role in the assembly of ribosomal proteins into the subunit. Circularly permuted GTPase that catalyzes slow GTP hydrolysis, GTPase activity is stimulated by the 30S ribosomal subunit. This Ralstonia nicotianae (strain ATCC BAA-1114 / GMI1000) (Ralstonia solanacearum) protein is Small ribosomal subunit biogenesis GTPase RsgA.